The primary structure comprises 945 residues: Chaperone protein ClpD, chloroplastic (945 aa).

The N-terminal 89 residues, 1–89 (MEVLSTSSPL…FERFTERAIR (89 aa)), are a transit peptide targeting the chloroplast. Repeat regions lie at residues 90–146 (AIIF…WDEA) and 168–233 (FSIS…LKGE). In terms of domain architecture, Clp R spans 90–233 (AIIFSQKEAK…AAALTRLKGE (144 aa)). The segment at 233-264 (EIAKDGREPSSSSKGSFESPPSGRIAGSGPGG) is disordered. Low complexity predominate over residues 241 to 255 (PSSSSKGSFESPPSG). Positions 271–523 (LEQFCVDLTA…RARIEAFRKK (253 aa)) are i. Residue 316-323 (GEAGVGKT) coordinates ATP. Residues 555-586 (SRQKQDDGDAISDESGELVEESSLPPAAGDDE) form a disordered region. The span at 562–574 (GDAISDESGELVE) shows a compositional bias: acidic residues. Residues 590-781 (VGPDDIAAVA…LIIMTSNVGS (192 aa)) form an II region. Position 664 to 671 (664 to 671 (GPTGVGKT)) interacts with ATP.

This sequence belongs to the ClpA/ClpB family. ClpD subfamily. In terms of assembly, homodimer and homohexamer. Hexamerization upon addition of ATP. Interacts with CLPT1. Stably associated with the import machinery. Requires Mg(2+) as cofactor. As to expression, expressed in stems and leaves.

Its subcellular location is the plastid. The protein localises to the chloroplast stroma. The catalysed reaction is ATP + H2O = ADP + phosphate + H(+). Its function is as follows. Molecular chaperone that interact with a ClpP-like protease involved in degradation of denatured proteins in the chloroplast. The ATPase activity of CLPD is stimulated by CLPT1. Has no ADPase activity. Interacts with transit peptides with a positional preference. Localization of the signal sequence at the N-terminal end of a protein seems mandatory for interaction to take place. This is Chaperone protein ClpD, chloroplastic from Arabidopsis thaliana (Mouse-ear cress).